We begin with the raw amino-acid sequence, 74 residues long: Acyl carrier protein (74 aa).

The Carrier domain maps to 1-73 (MAVFEKVQEI…DLVAYVEEQA (73 aa)). Residue S35 is modified to O-(pantetheine 4'-phosphoryl)serine.

Belongs to the acyl carrier protein (ACP) family. In terms of processing, 4'-phosphopantetheine is transferred from CoA to a specific serine of apo-ACP by AcpS. This modification is essential for activity because fatty acids are bound in thioester linkage to the sulfhydryl of the prosthetic group.

The protein resides in the cytoplasm. It participates in lipid metabolism; fatty acid biosynthesis. Carrier of the growing fatty acid chain in fatty acid biosynthesis. In Streptococcus pneumoniae serotype 4 (strain ATCC BAA-334 / TIGR4), this protein is Acyl carrier protein.